A 371-amino-acid polypeptide reads, in one-letter code: MAKFAPVQYKYIIKAEFEIDGIVDREDIIGAIFGQTEGLLGMELDLRELQKQGKLGRIEVEYKRVGNKTIGTITIPTSLKAVETSLIAAAIETVDRVGPAKARFRVKEIVDVRSSKREYIRNRAKELFVQLLSKTAPDIEELRRELEEAYYSKQLIEYGEEKLPAGPLVEKSDEIILVEGRADVVNLVKHGILNVLGMNGINIPKSVVELSKRKKVTLFIDGDRGGELVLRNLLAAGADIDYVAVAPPGREVEELTNKEILKALKSKIPLEQYIKNLRISINNDENKEKYKELLSKVFDTKKAIVFDEQFNIIDEKPLEEIDKLPSAYGIAIDKILDNETYAKIKGKYQLILALDSNVNAQERVITLKDIQ.

In terms of domain architecture, Toprim spans aspartate 173–proline 248. Residues glutamate 179, aspartate 221, and aspartate 223 each contribute to the Mg(2+) site.

The protein belongs to the archaeal DnaG primase family. As to quaternary structure, forms a ternary complex with MCM helicase and DNA. Component of the archaeal exosome complex. The cofactor is Mg(2+).

It carries out the reaction ssDNA + n NTP = ssDNA/pppN(pN)n-1 hybrid + (n-1) diphosphate.. RNA polymerase that catalyzes the synthesis of short RNA molecules used as primers for DNA polymerase during DNA replication. Also part of the exosome, which is a complex involved in RNA degradation. Acts as a poly(A)-binding protein that enhances the interaction between heteromeric, adenine-rich transcripts and the exosome. This is DNA primase DnaG from Nanoarchaeum equitans (strain Kin4-M).